The sequence spans 209 residues: Uracil phosphoribosyltransferase (209 aa).

Residues Arg-79, Arg-104, and 131 to 139 (DPMLATGGS) contribute to the 5-phospho-alpha-D-ribose 1-diphosphate site. Uracil-binding positions include Ile-194 and 199–201 (GDA). Residue Asp-200 coordinates 5-phospho-alpha-D-ribose 1-diphosphate.

The protein belongs to the UPRTase family. It depends on Mg(2+) as a cofactor.

The catalysed reaction is UMP + diphosphate = 5-phospho-alpha-D-ribose 1-diphosphate + uracil. The protein operates within pyrimidine metabolism; UMP biosynthesis via salvage pathway; UMP from uracil: step 1/1. With respect to regulation, allosterically activated by GTP. Functionally, catalyzes the conversion of uracil and 5-phospho-alpha-D-ribose 1-diphosphate (PRPP) to UMP and diphosphate. The chain is Uracil phosphoribosyltransferase from Ligilactobacillus salivarius (strain UCC118) (Lactobacillus salivarius).